The chain runs to 156 residues: Probable histone H2A.6 (156 aa).

Disordered regions lie at residues 1–26 (MDVG…KKPV) and 129–156 (KKTA…QARS). Residues 9-26 (AAKKAVGRKLGGPKKKPV) are compositionally biased toward basic residues. Basic and acidic residues predominate over residues 130–147 (KTAEKADKPAKASKDKAA). The SPKK motif motif lies at 149–152 (SPKK).

Belongs to the histone H2A family. As to quaternary structure, the nucleosome is a histone octamer containing two molecules each of H2A, H2B, H3 and H4 assembled in one H3-H4 heterotetramer and two H2A-H2B heterodimers. The octamer wraps approximately 147 bp of DNA.

It is found in the nucleus. Its subcellular location is the chromosome. Its function is as follows. Core component of nucleosome. Nucleosomes wrap and compact DNA into chromatin, limiting DNA accessibility to the cellular machineries which require DNA as a template. Histones thereby play a central role in transcription regulation, DNA repair, DNA replication and chromosomal stability. DNA accessibility is regulated via a complex set of post-translational modifications of histones, also called histone code, and nucleosome remodeling. The polypeptide is Probable histone H2A.6 (Oryza sativa subsp. indica (Rice)).